A 213-amino-acid polypeptide reads, in one-letter code: 3-demethoxyubiquinol 3-hydroxylase (213 aa).

The Fe cation site is built by E62, E92, H95, E144, E176, and H179.

This sequence belongs to the COQ7 family. The cofactor is Fe cation.

It is found in the cell membrane. It catalyses the reaction a 5-methoxy-2-methyl-3-(all-trans-polyprenyl)benzene-1,4-diol + AH2 + O2 = a 3-demethylubiquinol + A + H2O. It participates in cofactor biosynthesis; ubiquinone biosynthesis. Functionally, catalyzes the hydroxylation of 2-nonaprenyl-3-methyl-6-methoxy-1,4-benzoquinol during ubiquinone biosynthesis. In Legionella pneumophila (strain Corby), this protein is 3-demethoxyubiquinol 3-hydroxylase.